Consider the following 285-residue polypeptide: Small ribosomal subunit protein uS2 (285 aa).

Positions R229–E285 are disordered. The span at E243–S257 shows a compositional bias: basic and acidic residues. Over residues A260–E275 the composition is skewed to low complexity. Basic and acidic residues predominate over residues T276–E285.

Belongs to the universal ribosomal protein uS2 family.

This chain is Small ribosomal subunit protein uS2, found in Kocuria rhizophila (strain ATCC 9341 / DSM 348 / NBRC 103217 / DC2201).